Reading from the N-terminus, the 377-residue chain is Meiotic driver cw9 (377 aa).

2 disordered regions span residues 1–49 (MKNK…DLNN) and 64–100 (NKSTTPPDYDENRLPITDEGNNPPNTHRENHSSGTTD). Residues 11 to 29 (SMDEMSAKNDNEIDLEKGP) show a composition bias toward basic and acidic residues. The next 7 membrane-spanning stretches (helical) occupy residues 105 to 125 (FLIKLLISFTSIILFNAPAVC), 142 to 162 (WTLFGFWCLVCTLALLFLTYF), 172 to 192 (VTIIFLAQCIKVTAVFLAQCV), 218 to 238 (VVIIWLLWVVICYTLFLRSKF), 252 to 272 (CSISAALLLFLLYVRLPFWTL), 276 to 296 (FSGLFQVLGVQSCVVIVTKGL), and 306 to 326 (ATGYEIEVSSLFVIGNFLFFY).

The protein belongs to the WTF family. Homomer. Forms protein aggregates. The two isoforms can interact with each other and with themselves. High sequence similarity is required for their interaction.

The protein localises to the spore membrane. It localises to the vacuole membrane. Its subcellular location is the ascus epiplasm. It is found in the cytoplasm. The protein resides in the endoplasmic reticulum membrane. In terms of biological role, promotes unequal transmission of alleles from the parental zygote to progeny spores by acting as poison/antidote system where the poison and antidote proteins are produced from the same locus; the poison component is trans-acting and targets all spores within an ascus whereas the antidote component is spore-specific, leading to poisoning of all progeny that do not inherit the allele. Functionally, localizes isoform 2 to the vacuole thereby facilitating its degradation. Forms toxic aggregates that disrupt spore maturation. The polypeptide is Meiotic driver cw9 (Schizosaccharomyces pombe (Fission yeast)).